A 167-amino-acid chain; its full sequence is CASP-like protein UU1 (167 aa).

Topologically, residues 1-17 are cytoplasmic; sequence MVELESQEAVTVASTAD. The chain crosses the membrane as a helical span at residues 18–38; sequence IAVDVSLRLLAAATSLASAVV. Residues 39 to 54 lie on the Extracellular side of the membrane; that stretch reads VAANHQQRWGVRVDFT. The helical transmembrane segment at 55–75 threads the bilayer; it reads LFQVWIGFVAVNLVCTVYAAA. The Cytoplasmic segment spans residues 76–94; sequence TAAAARKAMGRWWLHHADA. Residues 95–115 form a helical membrane-spanning segment; the sequence is VVVNLEAAATAGAGAIGSIAM. The Extracellular portion of the chain corresponds to 116–135; that stretch reads WGNEASGWYAVCRLYRRYCN. A helical transmembrane segment spans residues 136 to 156; sequence AGAAALALSLAAVLLLGVACA. Residues 157–167 are Cytoplasmic-facing; it reads RSRYPKMPPTT.

This sequence belongs to the Casparian strip membrane proteins (CASP) family. As to quaternary structure, homodimer and heterodimers.

It localises to the cell membrane. This Oryza sativa subsp. indica (Rice) protein is CASP-like protein UU1.